A 340-amino-acid chain; its full sequence is MDKRKESESATNGHLVKRIRIQDSSLITEGSVLQRTSDLNVPNLQMFGHTAEVLVARFDPSGSYFASGGMDRQILLWNVFGDVKNYGVLNGCKGAITDLQWSRDSRVVYCSSSDTHLMSWDAVSGQKIRKHKGHAGVVNALDVLKVGSELLTSVSDDCTMKVWDSRSKDCIKTIEEKYPLTAVAIAQQGTQVFIGGIDGAIKIWDLRNNHCSHVLKGHKDIITSLAISKDGSSLLSNSMDNTVRIFDVKPFASAQRQLQIFEGAIHGQEHNLLGVAWSRNSRFVGAGSSDKNVYVWSATGDLRYVLPGHEGSVNHVDFHPHQDIILSCSSDRTIFLGELN.

WD repeat units lie at residues 48–87 (GHTAEVLVARFDPSGSYFASGGMDRQILLWNVFGDVKNYG), 91–130 (GCKGAITDLQWSRDSRVVYCSSSDTHLMSWDAVSGQKIRK), 133–173 (GHAG…CIKT), 175–214 (EEKYPLTAVAIAQQGTQVFIGGIDGAIKIWDLRNNHCSHV), 217–256 (GHKDIITSLAISKDGSSLLSNSMDNTVRIFDVKPFASAQR), 267–306 (GQEHNLLGVAWSRNSRFVGAGSSDKNVYVWSATGDLRYVL), and 308–339 (GHEGSVNHVDFHPHQDIILSCSSDRTIFLGEL).

Belongs to the 40S cdc5-associated complex (or cwf complex), a spliceosome sub-complex reminiscent of a late-stage spliceosome composed of the U2, U5 and U6 snRNAs and at least brr2, cdc5, cwf2/prp3, cwf3/syf1, cwf4/syf3, cwf5/ecm2, spp42/cwf6, cwf7/spf27, cwf8, cwf9, cwf10, cwf11, cwf12, prp45/cwf13, cwf14, cwf15, cwf16, cwf17, cwf18, cwf19, cwf20, cwf21, cwf22, cwf23, cwf24, cwf25, cwf26, cyp7/cwf27, cwf28, cwf29/ist3, lea1, msl1, prp5/cwf1, prp10, prp12/sap130, prp17, prp22, sap61, sap62, sap114, sap145, slu7, smb1, smd1, smd3, smf1, smg1 and syf2.

The protein localises to the nucleus. Its function is as follows. Involved in mRNA splicing where it associates with cdc5 and the other cwf proteins as part of the spliceosome. This is Pre-mRNA-splicing factor cwf17 (cwf17) from Schizosaccharomyces pombe (strain 972 / ATCC 24843) (Fission yeast).